Here is a 124-residue protein sequence, read N- to C-terminus: Glycine cleavage system H protein (124 aa).

Positions V22–K103 constitute a Lipoyl-binding domain. K63 bears the N6-lipoyllysine mark.

It belongs to the GcvH family. As to quaternary structure, the glycine cleavage system is composed of four proteins: P, T, L and H. Requires (R)-lipoate as cofactor.

The glycine cleavage system catalyzes the degradation of glycine. The H protein shuttles the methylamine group of glycine from the P protein to the T protein. The sequence is that of Glycine cleavage system H protein from Bordetella pertussis (strain Tohama I / ATCC BAA-589 / NCTC 13251).